We begin with the raw amino-acid sequence, 85 residues long: Small ribosomal subunit protein uS17 (85 aa).

Belongs to the universal ribosomal protein uS17 family. In terms of assembly, part of the 30S ribosomal subunit.

Its function is as follows. One of the primary rRNA binding proteins, it binds specifically to the 5'-end of 16S ribosomal RNA. This is Small ribosomal subunit protein uS17 from Blochmanniella floridana.